A 624-amino-acid polypeptide reads, in one-letter code: Bifunctional protein ArgH (624 aa).

Positions 1 to 466 are argininosuccinate lyase; sequence MALWGGRFSQ…QERDNAGVKV (466 aa). Positions 464-614 constitute an N-acetyltransferase domain; that stretch reads VKVRPARLTD…DEVALEVNLQ (151 aa). The segment at 467–624 is probable acetyltransferase; it reads RPARLTDLDA…EQVIIKSSVA (158 aa).

It in the N-terminal section; belongs to the lyase 1 family. Argininosuccinate lyase subfamily.

The protein resides in the cytoplasm. It catalyses the reaction 2-(N(omega)-L-arginino)succinate = fumarate + L-arginine. Its pathway is amino-acid biosynthesis; L-arginine biosynthesis; L-arginine from L-ornithine and carbamoyl phosphate: step 3/3. The sequence is that of Bifunctional protein ArgH (argH) from Aliivibrio fischeri (strain ATCC 700601 / ES114) (Vibrio fischeri).